Reading from the N-terminus, the 78-residue chain is D-alanyl carrier protein (78 aa).

A Carrier domain is found at 1-78 (MAFRENVLEI…MIITQLEALK (78 aa)). At S36 the chain carries O-(pantetheine 4'-phosphoryl)serine.

This sequence belongs to the DltC family. 4'-phosphopantetheine is transferred from CoA to a specific serine of apo-DCP.

Its subcellular location is the cytoplasm. It participates in cell wall biogenesis; lipoteichoic acid biosynthesis. Its function is as follows. Carrier protein involved in the D-alanylation of lipoteichoic acid (LTA). The loading of thioester-linked D-alanine onto DltC is catalyzed by D-alanine--D-alanyl carrier protein ligase DltA. The DltC-carried D-alanyl group is further transferred to cell membrane phosphatidylglycerol (PG) by forming an ester bond, probably catalyzed by DltD. D-alanylation of LTA plays an important role in modulating the properties of the cell wall in Gram-positive bacteria, influencing the net charge of the cell wall. The sequence is that of D-alanyl carrier protein from Listeria welshimeri serovar 6b (strain ATCC 35897 / DSM 20650 / CCUG 15529 / CIP 8149 / NCTC 11857 / SLCC 5334 / V8).